The primary structure comprises 369 residues: Probable dual-specificity RNA methyltransferase RlmN (369 aa).

Catalysis depends on glutamate 106, which acts as the Proton acceptor. A Radical SAM core domain is found at 118 to 354 (EARRLTVCVS…VTVRRSRGQD (237 aa)). An intrachain disulfide couples cysteine 125 to cysteine 359. Residues cysteine 132, cysteine 136, and cysteine 139 each contribute to the [4Fe-4S] cluster site. S-adenosyl-L-methionine contacts are provided by residues 183–184 (GE), serine 215, 238–240 (SLH), and asparagine 316. Cysteine 359 (S-methylcysteine intermediate) is an active-site residue.

Belongs to the radical SAM superfamily. RlmN family. [4Fe-4S] cluster serves as cofactor.

Its subcellular location is the cytoplasm. It catalyses the reaction adenosine(2503) in 23S rRNA + 2 reduced [2Fe-2S]-[ferredoxin] + 2 S-adenosyl-L-methionine = 2-methyladenosine(2503) in 23S rRNA + 5'-deoxyadenosine + L-methionine + 2 oxidized [2Fe-2S]-[ferredoxin] + S-adenosyl-L-homocysteine. It carries out the reaction adenosine(37) in tRNA + 2 reduced [2Fe-2S]-[ferredoxin] + 2 S-adenosyl-L-methionine = 2-methyladenosine(37) in tRNA + 5'-deoxyadenosine + L-methionine + 2 oxidized [2Fe-2S]-[ferredoxin] + S-adenosyl-L-homocysteine. Specifically methylates position 2 of adenine 2503 in 23S rRNA and position 2 of adenine 37 in tRNAs. The polypeptide is Probable dual-specificity RNA methyltransferase RlmN (Salinibacter ruber (strain DSM 13855 / M31)).